Here is a 290-residue protein sequence, read N- to C-terminus: Poly-beta-1,6-N-acetyl-D-glucosamine N-deacetylase (290 aa).

Residues M1–A28 form the signal peptide. Residues R114–D290 form the NodB homology domain.

This sequence belongs to the polysaccharide deacetylase family.

Its subcellular location is the secreted. The protein localises to the cell wall. Functionally, catalyzes the N-deacetylation of poly-beta-1,6-N-acetyl-D-glucosamine (PNAG, also referred to as PIA), a biofilm adhesin polysaccharide. N-deacetylation is crucial for attachment of the polysaccharide to the bacterial cell surface; it leads to the introduction of positive charges in the otherwise neutral PIA polymer, allowing electrostatic interactions. The protein is Poly-beta-1,6-N-acetyl-D-glucosamine N-deacetylase (icaB) of Staphylococcus aureus (strain Mu50 / ATCC 700699).